We begin with the raw amino-acid sequence, 213 residues long: Ion-translocating oxidoreductase complex subunit A (213 aa).

The Periplasmic segment spans residues 1-24; that stretch reads MLLLWQSRIMPGSEANIYITMTEY. Residues 25-45 traverse the membrane as a helical segment; the sequence is LLLLIGTVLVNNFVLVKFLGL. Residues 46–58 are Cytoplasmic-facing; sequence CPFMGVSKKLETA. The helical transmembrane segment at 59–79 threads the bilayer; it reads IGMGLATTFVLTLASVCAYLV. Topologically, residues 80–86 are periplasmic; the sequence is ESYVLRP. Residues 87-107 traverse the membrane as a helical segment; sequence LGIEYLRTMSFILVIAVVVQF. The Cytoplasmic portion of the chain corresponds to 108-121; the sequence is TEMVVHKTSPTLYR. Residues 122 to 142 form a helical membrane-spanning segment; the sequence is LLGIFLPLITTNCAVLGVALL. At 143-153 the chain is on the periplasmic side; that stretch reads NINENHNFIQS. Residues 154–174 form a helical membrane-spanning segment; that stretch reads IIYGFGAAVGFSLVLILFASM. Over 175–190 the chain is Cytoplasmic; that stretch reads RERIHVADVPAPFKGA. A helical membrane pass occupies residues 191-211; that stretch reads SIAMITAGLMSLAFMGFTGLV. Residues 212 to 213 lie on the Periplasmic side of the membrane; it reads KL.

Belongs to the NqrDE/RnfAE family. In terms of assembly, the complex is composed of six subunits: RnfA, RnfB, RnfC, RnfD, RnfE and RnfG.

It localises to the cell inner membrane. In terms of biological role, part of a membrane-bound complex that couples electron transfer with translocation of ions across the membrane. The polypeptide is Ion-translocating oxidoreductase complex subunit A (Vibrio cholerae serotype O1 (strain ATCC 39541 / Classical Ogawa 395 / O395)).